Consider the following 309-residue polypeptide: Methyltransferase AacuQ (309 aa).

A methyltransferase domain region spans residues 57–149; that stretch reads DVGAGNGPYA…QLRPGGTFAC (93 aa).

It belongs to the methyltransferase superfamily.

The protein operates within secondary metabolite biosynthesis. Methyltransferase; part of the gene cluster that mediates the biosynthesis of the tetrahydroxanthone dimer secalonic acid D. The pathway begins with the synthesis of atrochrysone thioester by the polyketide synthase AacuL. The atrochrysone carboxyl ACP thioesterase AacuM then breaks the thioester bond and releases the atrochrysone carboxylic acid from AacuL. Atrochrysone carboxylic acid is decarboxylated by the decarboxylase AacuI, and oxidized by the anthrone oxygenase AacuG to yield emodin. Emodin is then reduced to emodin hydroquinone by a yet unidentified oxidoreductase. A-ring reduction by the short chain dehydrogenase AacuN, dehydration by the scytalone dehydratase-like protein AacuK and probable spontaneous re-oxidation, results in overall deoxygenation to chrysophanol. Baeyer-Villiger oxidation by the Baeyer-Villiger monooxygenase (BVMO) AacuH then yields monodictyphenone. Monodictyphenone is transformed into compounds with the tetrahydroxanthone skeleton via methylesterification by the methyltransferase AacuQ, followed by the action of the flavin-dependent monooxygenase AacuC, the isomerase AacuP, and the short chain dehydrogenase/reductase AacuF or AacuD. AacuF and AacuD should accept the same compound as a substrate but perform the ketoreduction with a different stereoselectivity, thus yielding blennolides B and A, respectively. In the final step of the biosynthesis, the cytochrome P450 monooxygenase AacuE accepts blennolide B and/or blennolide A to conduct the dimerization reaction to furnish the tetrahydroxanthone dimers, secalonic acids D, B, and F. The protein is Methyltransferase AacuQ of Aspergillus aculeatus (strain ATCC 16872 / CBS 172.66 / WB 5094).